The following is an 80-amino-acid chain: MRALRVSQALVRSFSSSTRSHLENRVAEKQKLFQADNDLPVHLKGGGMDNVLYRLTMTLTLGGTAYCLYCLGWASFPHKK.

The transit peptide at 1–21 (MRALRVSQALVRSFSSSTRSH) directs the protein to the mitochondrion. Residues 22–46 (LENRVAEKQKLFQADNDLPVHLKGG) are Mitochondrial matrix-facing. A helical transmembrane segment spans residues 47–75 (GMDNVLYRLTMTLTLGGTAYCLYCLGWAS). Over 76-80 (FPHKK) the chain is Mitochondrial intermembrane.

Belongs to the cytochrome c oxidase VIIa family. As to quaternary structure, component of the complex IV (CIV, cytochrome c oxidase), a multisubunit enzyme composed of 14 subunits. The complex is composed of a catalytic core of 3 subunits MT-CO1, MT-CO2 and MT-CO3, encoded in the mitochondrial DNA, and 11 supernumerary subunits COX4I, COX5A, COX5B, COX6A, COX6B, COX6C, COX7A, COX7B, COX7C, COX8 and NDUFA4, which are encoded in the nuclear genome. The complex exists as a monomer or a dimer and forms supercomplexes (SCs) in the inner mitochondrial membrane with NADH-ubiquinone oxidoreductase (complex I, CI) and ubiquinol-cytochrome c oxidoreductase (cytochrome b-c1 complex, complex III, CIII), resulting in different assemblies (supercomplex SCI(1)III(2)IV(1) and megacomplex MCI(2)III(2)IV(2)).

It localises to the mitochondrion inner membrane. It participates in energy metabolism; oxidative phosphorylation. Functionally, component of the mitochondrial respiratory complex IV (CIV, also named cytochrome c oxidase complex), the last enzyme in the mitochondrial electron transport chain which drives oxidative phosphorylation. The CIV complex is the component of the respiratory chain that catalyzes the reduction of oxygen to water. Acts as an assembly factor that specifically drives the homodimerization of CIV complexes, mediating the formation of mitochondrial respiratory supercomplexes (respirasomes) containing two CIV: supercomplxes with two molecules of CIV show improved activity. Despite being highly expressed in brown adipose tissue, not required for thermogenesis. The polypeptide is Cytochrome c oxidase subunit 7A1, mitochondrial (Mus musculus (Mouse)).